Consider the following 462-residue polypeptide: UDP-N-acetylmuramoylalanine--D-glutamate ligase (462 aa).

120–126 contacts ATP; the sequence is GTNGKTT.

The protein belongs to the MurCDEF family.

The protein localises to the cytoplasm. The catalysed reaction is UDP-N-acetyl-alpha-D-muramoyl-L-alanine + D-glutamate + ATP = UDP-N-acetyl-alpha-D-muramoyl-L-alanyl-D-glutamate + ADP + phosphate + H(+). The protein operates within cell wall biogenesis; peptidoglycan biosynthesis. In terms of biological role, cell wall formation. Catalyzes the addition of glutamate to the nucleotide precursor UDP-N-acetylmuramoyl-L-alanine (UMA). The polypeptide is UDP-N-acetylmuramoylalanine--D-glutamate ligase (Bdellovibrio bacteriovorus (strain ATCC 15356 / DSM 50701 / NCIMB 9529 / HD100)).